Here is a 333-residue protein sequence, read N- to C-terminus: Probable cytosolic iron-sulfur protein assembly protein 1 (333 aa).

WD repeat units follow at residues 12-50 (LHDD…IIEE), 55-94 (AHKK…YNDE), 107-146 (GHEN…EEFE), 153-192 (EHSQ…WECC), 197-238 (GHEG…GEYE), 250-288 (AHTR…WIVE), and 298-333 (YETN…FDEN).

It belongs to the WD repeat CIA1 family. In terms of assembly, interacts with NAR1.

Its subcellular location is the cytoplasm. The protein localises to the nucleus. Essential component of the cytosolic iron-sulfur (Fe/S) protein assembly machinery. Required for the maturation of extramitochondrial Fe/S proteins. In Kluyveromyces lactis (strain ATCC 8585 / CBS 2359 / DSM 70799 / NBRC 1267 / NRRL Y-1140 / WM37) (Yeast), this protein is Probable cytosolic iron-sulfur protein assembly protein 1.